Here is a 395-residue protein sequence, read N- to C-terminus: Imidazolonepropionase (395 aa).

Fe(3+) is bound by residues His-63 and His-65. Residues His-63 and His-65 each coordinate Zn(2+). 4-imidazolone-5-propanoate is bound by residues Arg-72, Tyr-135, and His-168. Tyr-135 is an N-formimidoyl-L-glutamate binding site. Residue His-233 participates in Fe(3+) binding. His-233 provides a ligand contact to Zn(2+). Residue Gln-236 participates in 4-imidazolone-5-propanoate binding. Asp-308 is a binding site for Fe(3+). Asp-308 provides a ligand contact to Zn(2+). Positions 310 and 312 each coordinate N-formimidoyl-L-glutamate. 4-imidazolone-5-propanoate is bound at residue Thr-313.

It belongs to the metallo-dependent hydrolases superfamily. HutI family. The cofactor is Zn(2+). Requires Fe(3+) as cofactor.

The protein resides in the cytoplasm. It carries out the reaction 4-imidazolone-5-propanoate + H2O = N-formimidoyl-L-glutamate. It participates in amino-acid degradation; L-histidine degradation into L-glutamate; N-formimidoyl-L-glutamate from L-histidine: step 3/3. Catalyzes the hydrolytic cleavage of the carbon-nitrogen bond in imidazolone-5-propanoate to yield N-formimidoyl-L-glutamate. It is the third step in the universal histidine degradation pathway. The polypeptide is Imidazolonepropionase (Cereibacter sphaeroides (strain ATCC 17029 / ATH 2.4.9) (Rhodobacter sphaeroides)).